Reading from the N-terminus, the 181-residue chain is Putative poly [ADP-ribose] polymerase-like 100L (181 aa).

Residues 1–181 (MDNLKEEETN…KIKYIIHITK (181 aa)) form the PARP catalytic domain.

The catalysed reaction is NAD(+) + (ADP-D-ribosyl)n-acceptor = nicotinamide + (ADP-D-ribosyl)n+1-acceptor + H(+).. This is Putative poly [ADP-ribose] polymerase-like 100L from Invertebrate iridescent virus 6 (IIV-6).